Reading from the N-terminus, the 74-residue chain is Cytochrome c oxidase assembly factor 5 (74 aa).

A CHCH domain is found at 27 to 65; it reads ESDCVVQEGKSPRQCLKEGYCNSLKYAFFECKRSVLDNR. Residues 30–41 carry the Cx10C motif motif; that stretch reads CVVQEGKSPRQC. 2 disulfides stabilise this stretch: Cys-30-Cys-57 and Cys-41-Cys-47. Ser-37 bears the Phosphoserine mark. The short motif at 47–57 is the Cx9C motif element; the sequence is CNSLKYAFFEC.

This sequence belongs to the PET191 family.

Involved in an early step of the mitochondrial complex IV assembly process. This chain is Cytochrome c oxidase assembly factor 5 (Coa5), found in Pongo abelii (Sumatran orangutan).